The primary structure comprises 168 residues: Lipoprotein signal peptidase (168 aa).

Helical transmembrane passes span 12 to 32 (WYWV…WVLA), 67 to 87 (WQRW…TIWL), and 93 to 113 (NMVR…GNLI). Catalysis depends on residues aspartate 123 and aspartate 141. Residues 136 to 156 (AFNIADAAIFIGAVLIIIDSF) form a helical membrane-spanning segment.

This sequence belongs to the peptidase A8 family.

Its subcellular location is the cell inner membrane. The catalysed reaction is Release of signal peptides from bacterial membrane prolipoproteins. Hydrolyzes -Xaa-Yaa-Zaa-|-(S,diacylglyceryl)Cys-, in which Xaa is hydrophobic (preferably Leu), and Yaa (Ala or Ser) and Zaa (Gly or Ala) have small, neutral side chains.. It functions in the pathway protein modification; lipoprotein biosynthesis (signal peptide cleavage). Functionally, this protein specifically catalyzes the removal of signal peptides from prolipoproteins. In Shewanella amazonensis (strain ATCC BAA-1098 / SB2B), this protein is Lipoprotein signal peptidase.